The sequence spans 153 residues: NADPH-dependent 7-cyano-7-deazaguanine reductase (153 aa).

Residues 1–17 (MTDTRNLTQLGSKTQAP) are compositionally biased toward polar residues. The segment at 1–23 (MTDTRNLTQLGSKTQAPASPEAA) is disordered. The active-site Thioimide intermediate is the Cys-51. The active-site Proton donor is Asp-58. Substrate contacts are provided by residues 73–75 (VES) and 92–93 (HE).

This sequence belongs to the GTP cyclohydrolase I family. QueF type 1 subfamily.

Its subcellular location is the cytoplasm. The enzyme catalyses 7-aminomethyl-7-carbaguanine + 2 NADP(+) = 7-cyano-7-deazaguanine + 2 NADPH + 3 H(+). The protein operates within tRNA modification; tRNA-queuosine biosynthesis. Functionally, catalyzes the NADPH-dependent reduction of 7-cyano-7-deazaguanine (preQ0) to 7-aminomethyl-7-deazaguanine (preQ1). This Chelativorans sp. (strain BNC1) protein is NADPH-dependent 7-cyano-7-deazaguanine reductase.